The following is a 554-amino-acid chain: Valerianol synthase TPS8 (554 aa).

The short motif at glutamine 288–glycine 292 is the DDXXD motif element. Residues aspartate 307, aspartate 311, aspartate 452, serine 456, and glutamate 460 each coordinate Mg(2+).

The protein belongs to the terpene synthase family. Requires Mg(2+) as cofactor.

The catalysed reaction is (2E,6E)-farnesyl diphosphate + H2O = valerianol + diphosphate. Its pathway is secondary metabolite biosynthesis; terpenoid biosynthesis. In terms of biological role, terpene synthase that catalyzes the biosynthesis of the terpene valerianol. The protein is Valerianol synthase TPS8 of Camellia sinensis (Tea plant).